Consider the following 252-residue polypeptide: MSHRRDYGSDAVHVRITHDPPPENCFPNSGDSSVWATEDDYSRVWAINSDGAESPSKKTRSSSSSEIGKSFFKTKLCFKFRAGTCPYSASSCHFAHSAEELRLPPPPPPNWQETVTEASRNRESFAVSLGPRGNVAQTLKSPNWKTRICNKWQTTGYCPFGSHCHFAHGPSELHTFGGGLVEGECKIGTSATLDTKQRGQVDTVTSLVSPGVSSQRTSSAVTQKPNGVRTQRKWKGPDKISRVYGDWIDDIE.

Basic and acidic residues predominate over residues 1–21 (MSHRRDYGSDAVHVRITHDPP). The tract at residues 1–31 (MSHRRDYGSDAVHVRITHDPPPENCFPNSGD) is disordered. 2 C3H1-type zinc fingers span residues 71–99 (FFKT…HSAE) and 143–171 (NWKT…HGPS).

The protein is Zinc finger CCCH domain-containing protein 28 of Arabidopsis thaliana (Mouse-ear cress).